A 339-amino-acid chain; its full sequence is Transmembrane protein 120B (339 aa).

Residues 1–77 (MSGQLERCER…ASREEAELVQ (77 aa)) adopt a coiled-coil conformation. 6 consecutive transmembrane segments (helical) span residues 102–124 (GLYLNLVLGNVNVTLLSNQAKFA), 132–152 (FKLYLTIILLLGAVACRFVLH), 159–179 (VFNFLLVWYYCTLTIRESILI), 187–207 (GWWVSHHYVSTFLSGVMLTWP), 270–290 (FLLPFLFCGHFWQLYNAVTLF), and 302–322 (QVFVLAFTFLILFLGNFLTTL).

Belongs to the TMEM120 family. As to quaternary structure, heterooligomer with TMEM120A.

Its subcellular location is the nucleus inner membrane. Functionally, necessary for efficient adipogenesis. Does not show ion channel activity. The chain is Transmembrane protein 120B from Homo sapiens (Human).